Consider the following 232-residue polypeptide: Ribonuclease 3 (232 aa).

One can recognise an RNase III domain in the interval Q5–D134. E47 contributes to the Mg(2+) binding site. The active site involves D51. Positions 120 and 123 each coordinate Mg(2+). Residue E123 is part of the active site. Residues D160–D229 enclose the DRBM domain.

This sequence belongs to the ribonuclease III family. As to quaternary structure, homodimer. Mg(2+) is required as a cofactor.

It is found in the cytoplasm. The enzyme catalyses Endonucleolytic cleavage to 5'-phosphomonoester.. In terms of biological role, digests double-stranded RNA. Involved in the processing of primary rRNA transcript to yield the immediate precursors to the large and small rRNAs (23S and 16S). Processes some mRNAs, and tRNAs when they are encoded in the rRNA operon. Processes pre-crRNA and tracrRNA of type II CRISPR loci if present in the organism. The protein is Ribonuclease 3 of Streptococcus pneumoniae (strain Hungary19A-6).